The sequence spans 86 residues: Large ribosomal subunit protein bL27 (86 aa).

A compositionally biased stretch (gly residues) spans 1-10 (MAQKKGGGST). A disordered region spans residues 1 to 21 (MAQKKGGGSTRNGRDSESKRL).

This sequence belongs to the bacterial ribosomal protein bL27 family.

This Cupriavidus pinatubonensis (strain JMP 134 / LMG 1197) (Cupriavidus necator (strain JMP 134)) protein is Large ribosomal subunit protein bL27.